A 174-amino-acid chain; its full sequence is uncharacterized protein (174 aa).

The chain crosses the membrane as a helical span at residues 7–24; it reads LLLLAFAVCLAVGFSGCL.

Its subcellular location is the membrane. This is an uncharacterized protein from Methanocaldococcus jannaschii (strain ATCC 43067 / DSM 2661 / JAL-1 / JCM 10045 / NBRC 100440) (Methanococcus jannaschii).